The primary structure comprises 273 residues: Rhamnulose-1-phosphate aldolase (273 aa).

Residue Glu117 is part of the active site. Zn(2+)-binding residues include His140, His142, and His211.

The protein belongs to the aldolase class II family. RhaD subfamily. Zn(2+) serves as cofactor.

It is found in the cytoplasm. The catalysed reaction is L-rhamnulose 1-phosphate = (S)-lactaldehyde + dihydroxyacetone phosphate. It functions in the pathway carbohydrate degradation; L-rhamnose degradation; glycerone phosphate from L-rhamnose: step 3/3. Catalyzes the reversible cleavage of L-rhamnulose-1-phosphate to dihydroxyacetone phosphate (DHAP) and L-lactaldehyde. The polypeptide is Rhamnulose-1-phosphate aldolase (Listeria monocytogenes serovar 1/2a (strain ATCC BAA-679 / EGD-e)).